Consider the following 831-residue polypeptide: Histone acetyltransferase SAS3 (831 aa).

The region spanning 267–573 (VWFSQIEYIV…VKYDKLLWEP (307 aa)) is the MYST-type HAT domain. The segment at 300–325 (VFICEFCLKYMTSRYTFYRHQLKCLT) adopts a C2HC MYST-type zinc-finger fold. At Lys-367 the chain carries N6-acetyllysine; by autocatalysis. Acetyl-CoA-binding positions include 419–421 (ILT) and 426–432 (QRKGYGQ). The active-site Proton donor/acceptor is the Glu-452. Acetyl-CoA is bound at residue Ser-456. 2 disordered regions span residues 614–639 (ENYN…KTSK) and 719–813 (PLGN…SHIR). Basic residues predominate over residues 621-633 (AHNKRRRRRRRSS). Acidic residues-rich tracts occupy residues 736-746 (EQDEVENDVDT) and 755-794 (KEDE…DDDE). Basic and acidic residues predominate over residues 795–812 (DGKRKGQEQDENDIESHI).

The protein belongs to the MYST (SAS/MOZ) family. Component of the NuA3 histone acetyltransferase (HAT) complex. The NuA3 HAT complex has 2 functionally distinct forms that participate in transcription. The NuA3a HAT complex is composed of at least NTO1, SAS3, TAF14, YNG1 and EAF6. The NuA3b HAT complex contains an additional subunit, PDP3. SAS3 interacts with CDC68/SPT16. Post-translationally, autoacetylation at Lys-367 is required for proper function.

It localises to the nucleus. The enzyme catalyses L-lysyl-[protein] + acetyl-CoA = N(6)-acetyl-L-lysyl-[protein] + CoA + H(+). In terms of biological role, catalytic component of the NuA3 histone acetyltransferase complex, that acetylates H3K14. The NuA3 HAT complex has 2 functionally distinct forms. NuA3a binds H3K4me3, through the PHD finger of YNG1, and acetylates H3K14 at the promoter region of actively transcribed genes to promote transcription initiation. NuA3b binds H3K36me3 at the coding regions of actively transcribed genes, through the PWWP domain of PDP3, and coordinates transcription elongation. In vitro, SAS3 acetylates free histones H3 and H4. It is involved in silencing the HMR locus. This Saccharomyces cerevisiae (strain ATCC 204508 / S288c) (Baker's yeast) protein is Histone acetyltransferase SAS3.